Consider the following 1028-residue polypeptide: MNLFNLDRFRFEKRNKIEEAPEATPQPSQPGPSSPISLSAEEENAEGEVSRAGTPDSDVTEKTEDSSVPETPENDRKASISYFKNQRGIQYIDLSSDSEDVVSPNCSSTVQEKKFNKDTVIIVSEPSEDEESQGLPTMATRNNNDITNLKNLSFFPNYSDNLSTVRQTRYSENLSSDLLKLIDSTSTMDGAIAAALLMFGDAEGGGPRKRKLSSSSEPFEEDEFNDDQSMKKKRLDHGEESNESAESSTNWEKQESIVLKLQKEFPNFDKEELREVLKEHEWMYTEALESLKVFAEDQDMQYASPSEFPNGKEVSSRSQNYPKNAAKTKLKQKCSMKPQNGFNKKRKKNVFNPKRVIEDSEYDSGSDVGSSLDEDYSSGEEVMEDGYKGKILHFLQDASIGELTLIPQCSQKKAQKITELRPFNSWEALFTKMSKTNGLSEDLIWHCKTLIQERDVVIKLMNKCEDISNKLTKQVTMLTGNGGGWNTEQPSILNQSLSLKPYQKVGLNWLALVHKHGLNGILADEMGLGKTIQAIAFLAYLYQEGNKGPHLIVVPASTIDNWLREVNLWCPTLKVLCYYGSQEERKQIRYNIHSRYEEYNVIVTTYNCAISSSDDRSLFRRLKLNYAIFDEGHMLKNMGSIRYQHLMTINANNRLLLTGTPVQNNLLELMSLLNFVMPHMFSSSTSEIRRMFSSKTKPADEQSIYEKERIAHAKQIIKPFILRRVKEEVLKQLPPKKDRIELCAMSEKQEQLYMNLFNRLKKSINNMEKNTEMCNVMMQLRKMANHPLLHRQYYTAEKLKEMSQLMLKEPTHCEANPDLIFEDMEVMTDFELHVLCKQYRHINNFQLDMDLILDSGKFRVLGCILSELKQKGDRVVLFSQFTMMLDILEVLLKHHQHRYLRLDGKTQISERIHLIDEFNTDMDIFVFLLSTKAGGLGINLTSANVVILHDIDCNPYNDKQAEDRCHRVGQTKEVLVIKLIGQGTIEESMLKINQQKLKLEQDMTTVDEGDEGSMPADIATLLKTSMGL.

M1 carries the N-acetylmethionine modification. Residues 13–81 (KRNKIEEAPE…PENDRKASIS (69 aa)) are disordered. T54 is subject to Phosphothreonine. Residue S57 is modified to Phosphoserine. The residue at position 71 (T71) is a Phosphothreonine. Residue K77 forms a Glycyl lysine isopeptide (Lys-Gly) (interchain with G-Cter in SUMO2) linkage. The residue at position 79 (S79) is a Phosphoserine. Residue K84 forms a Glycyl lysine isopeptide (Lys-Gly) (interchain with G-Cter in SUMO2) linkage. Phosphoserine occurs at positions 124, 127, 132, and 153. The CUE 1 domain occupies 158–200 (YSDNLSTVRQTRYSENLSSDLLKLIDSTSTMDGAIAAALLMFG). Disordered regions lie at residues 204-253 (GGGP…NWEK) and 303-348 (ASPS…KRKK). Phosphoserine occurs at positions 213, 216, 241, and 244. Residues 253–296 (KQESIVLKLQKEFPNFDKEELREVLKEHEWMYTEALESLKVFAE) form the CUE 2 domain. S304 is subject to Phosphoserine. Residues K337 and K473 each participate in a glycyl lysine isopeptide (Lys-Gly) (interchain with G-Cter in SUMO2) cross-link. One can recognise a Helicase ATP-binding domain in the interval 511–679 (ALVHKHGLNG…MSLLNFVMPH (169 aa)). 523 to 531 (ADEMGLGKT) is an ATP binding site. The short motif at 630 to 633 (DEGH) is the DEGH box element. The Nuclear localization signal motif lies at 723 to 740 (RRVKEEVLKQLPPKKDRI). A Glycyl lysine isopeptide (Lys-Gly) (interchain with G-Cter in SUMO2) cross-link involves residue K726. A Helicase C-terminal domain is found at 860–1012 (VLGCILSELK…MTTVDEGDEG (153 aa)). 899–906 (YLRLDGKT) provides a ligand contact to ATP. K998 is covalently cross-linked (Glycyl lysine isopeptide (Lys-Gly) (interchain with G-Cter in SUMO2)). The short motif at 1007 to 1010 (DEGD) is the DEAD box element.

This sequence belongs to the SNF2/RAD54 helicase family. As to quaternary structure, binds to DNA preferentially in the vicinity of transcriptional start sites. Interacts with MSH2 and TRIM28. Part of a complex composed of TRIM28, HDAC1, HDAC2 and EHMT2. Interacts with PCNA.

It is found in the nucleus. Its subcellular location is the chromosome. The catalysed reaction is ATP + H2O = ADP + phosphate + H(+). DNA helicase that possesses intrinsic ATP-dependent nucleosome-remodeling activity and is both required for DNA repair and heterochromatin organization. Promotes DNA end resection of double-strand breaks (DSBs) following DNA damage: probably acts by weakening histone DNA interactions in nucleosomes flanking DSBs. Required for the restoration of heterochromatin organization after replication. Acts at replication sites to facilitate the maintenance of heterochromatin by directing H3 and H4 histones deacetylation, H3 'Lys-9' trimethylation (H3K9me3) and restoration of silencing. The sequence is that of SWI/SNF-related matrix-associated actin-dependent regulator of chromatin subfamily A containing DEAD/H box 1 (SMARCAD1) from Bos taurus (Bovine).